We begin with the raw amino-acid sequence, 238 residues long: MTAQSKNYRKAASAIDRDRLYAPLEAVRLAKAGASTKFDSTVEVAFRLGVDPRKADQMVRGTVNLPHGTGKTARVLVFAVGERAEQARAAGADEVGGDELIEKVAGGYVDFDAAVATPDLMGKVGRLGRVLGPRGLMPNPRTGTVTMDVAKAVEEIKGGKIDFRVDKHANLHVVVGKASFDETALVENYASVLDEVLRLKPSSSKGRYIVKATLSTTMGPGIPLDASKTRNLTGEDAA.

It belongs to the universal ribosomal protein uL1 family. Part of the 50S ribosomal subunit.

Its function is as follows. Binds directly to 23S rRNA. The L1 stalk is quite mobile in the ribosome, and is involved in E site tRNA release. Protein L1 is also a translational repressor protein, it controls the translation of the L11 operon by binding to its mRNA. The protein is Large ribosomal subunit protein uL1 of Beutenbergia cavernae (strain ATCC BAA-8 / DSM 12333 / CCUG 43141 / JCM 11478 / NBRC 16432 / NCIMB 13614 / HKI 0122).